A 1117-amino-acid polypeptide reads, in one-letter code: Cytospin-A (1117 aa).

3 disordered regions span residues 1-176, 293-323, and 358-390; these read MKKA…NQIS, SLSP…GSVE, and SSDD…NASE. Low complexity-rich tracts occupy residues 45–72 and 99–119; these read TTAS…TNGV and KIST…NKES. Composition is skewed to basic and acidic residues over residues 120–131 and 158–171; these read SSTRERLRERTR and TTTE…KSKS. A coiled-coil region spans residues 168–280; sequence KSKSDNQISD…LNALGFSLEQ (113 aa). Over residues 293–303 the composition is skewed to polar residues; it reads SLSPEITPGNQ. Residues 358-377 show a composition bias toward low complexity; sequence SSDDALDAPSSSESEGIPSI. Residues serine 384, serine 385, and serine 389 each carry the phosphoserine modification. Coiled-coil stretches lie at residues 394-449 and 487-807; these read ACLT…MESL and RYME…RGRV. Positions 852-878 are disordered; sequence SQVPNPTAAAIPRTPLSPSPMKTPPAA. A phosphoserine mark is found at serine 868, serine 881, and serine 887. Residues 920–997 are disordered; it reads TSSTSRPASL…PTTRSRIREE (78 aa). The segment covering 946 to 956 has biased composition (basic and acidic residues); the sequence is RSSEEMKRDIS. Low complexity predominate over residues 971 to 990; it reads TTSPQLSLSSSPTASVTPTT. The 106-residue stretch at 1011 to 1116 folds into the Calponin-homology (CH) domain; that stretch reads GSKRNALLKW…YVTAIYKYFE (106 aa).

This sequence belongs to the cytospin-A family. In terms of assembly, may interact with both microtubules and actin cytoskeleton.

The protein resides in the cytoplasm. It localises to the cytoskeleton. Its subcellular location is the spindle. It is found in the cell junction. The protein localises to the gap junction. Its function is as follows. Involved in cytokinesis and spindle organization. May play a role in actin cytoskeleton organization and microtubule stabilization and hence required for proper cell adhesion and migration. This Canis lupus familiaris (Dog) protein is Cytospin-A (SPECC1L).